The chain runs to 60 residues: Cytotoxin 5 (60 aa).

Cystine bridges form between C3-C21, C14-C38, C42-C53, and C54-C59.

It belongs to the three-finger toxin family. Short-chain subfamily. Type IA cytotoxin sub-subfamily. Monomer in solution; Homodimer and oligomer in the presence of negatively charged lipids forming a pore with a size ranging between 20 and 30 Angstroms. Expressed by the venom gland.

The protein localises to the secreted. It is found in the target cell membrane. Functionally, shows cytolytic activity on many different cells by forming pore in lipid membranes. In vivo, increases heart rate or kills the animal by cardiac arrest. In addition, it binds to heparin with high affinity, interacts with Kv channel-interacting protein 1 (KCNIP1) in a calcium-independent manner, and binds to integrin alpha-V/beta-3 (ITGAV/ITGB3) with moderate affinity. The protein is Cytotoxin 5 of Naja mossambica (Mozambique spitting cobra).